A 221-amino-acid chain; its full sequence is MGRSSWRLVFAAGAGLALALEALPWLMRWLLAGRRPRREVLFFPSQVTCTEALLQAPGLPPGPSGCPCSLPHSESSLSRLLRALLAARSSLELCLFAFSSPQLGRAVQLLHQRGVRVRVITDCDYMALNGSQIGLLRKAGIQVRHDQDLGYMHHKFAIVDKKVLITGSLNWTTQAIQNNRENVLIMEDTEYVRLFLEEFERIWEEFDPTKYSFFPQKHRGH.

Over 1–4 (MGRS) the chain is Mitochondrial intermembrane. The segment at 1 to 38 (MGRSSWRLVFAAGAGLALALEALPWLMRWLLAGRRPRR) is required for mitochondrial localization. Residues 5–27 (SWRLVFAAGAGLALALEALPWLM) traverse the membrane as a helical segment. Residues 28-221 (RWLLAGRRPR…SFFPQKHRGH (194 aa)) lie on the Cytoplasmic side of the membrane. Residues 44 to 75 (PSQVTCTEALLQAPGLPPGPSGCPCSLPHSES) form a C3H1-type; atypical zinc finger. In terms of domain architecture, PLD phosphodiesterase spans 148 to 175 (DLGYMHHKFAIVDKKVLITGSLNWTTQA). Residues H153, K155, and D160 contribute to the active site.

The protein belongs to the phospholipase D family. MitoPLD/Zucchini subfamily. Homodimer. Interacts with MOV10L1. Interacts with MIGA1 and MIGA2; possibly facilitating homodimer formation. Interacts with GK2. Predominantly expressed in testis (at protein level) and in growing ovary. Also expressed in the brain, eye and urinary bladder (at protein level), but its levels were low or undetectable in other organs.

It is found in the mitochondrion outer membrane. It localises to the nucleus membrane. The protein resides in the cell membrane. Its subcellular location is the golgi apparatus. It catalyses the reaction a cardiolipin + H2O = a 1,2-diacyl-sn-glycero-3-phospho-(1'-sn-glycerol) + a 1,2-diacyl-sn-glycero-3-phosphate + H(+). With respect to regulation, single stranded DNA (ssDNA) hydrolase activity does not depend upon, but is stimulated by the presence of Ca(2+) and Mn(2+). MIGA1 and MIGA2 increase PLD6 self-association affinity and affects the homodimer conformation facilitating its phospholipase activity over the nuclease activity. MYC induces its expression and stimulates its phospholipase activity. Functionally, presents phospholipase and nuclease activities, depending on the different physiological conditions. Interaction with Mitoguardin (MIGA1 or MIGA2) affects the dimer conformation, facilitating the lipase activity over the nuclease activity. Plays a key role in mitochondrial fusion and fission via its phospholipase activity. In its phospholipase role, it uses the mitochondrial lipid cardiolipin as substrate to generate phosphatidate (PA or 1,2-diacyl-sn-glycero-3-phosphate), a second messenger signaling lipid. Production of PA facilitates Mitofusin-mediated fusion, whereas the cleavage of PA by the Lipin family of phosphatases produces diacylgycerol (DAG) which promotes mitochondrial fission. Both Lipin and DAG regulate mitochondrial dynamics and membrane fusion/fission, important processes for adapting mitochondrial metabolism to changes in cell physiology. Mitochondrial fusion enables cells to cope with the increased nucleotide demand during DNA synthesis. Mitochondrial function and dynamics are closely associated with biological processes such as cell growth, proliferation, and differentiation. Mediator of MYC activity, promotes mitochondrial fusion and activates AMPK which in turn inhibits YAP/TAZ, thereby inducing cell growth and proliferation. The endonuclease activity plays a critical role in PIWI-interacting RNA (piRNA) biogenesis during spermatogenesis. Implicated in spermatogenesis and sperm fertility in testicular germ cells, its single strand-specific nuclease activity is critical for the biogenesis/maturation of PIWI-interacting RNA (piRNA). MOV10L1 selectively binds to piRNA precursors and funnels them to the endonuclease that catalyzes the first cleavage step of piRNA processing to generate piRNA intermediate fragments that are subsequently loaded to Piwi proteins. Cleaves either DNA or RNA substrates with similar affinity, producing a 5' phosphate end, in this way it participates in the processing of primary piRNA transcripts. piRNAs provide essential protection against the activity of mobile genetic elements. piRNA-mediated transposon silencing is thus critical for maintaining genome stability, in particular in germline cells when transposons are mobilized as a consequence of wide-spread genomic demethylation. PA may act as signaling molecule in the recognition/transport of the precursor RNAs of primary piRNAs. Interacts with tesmin in testes, suggesting a role in spermatogenesis via association with its interacting partner. This Mus musculus (Mouse) protein is Mitochondrial cardiolipin hydrolase (Pld6).